The chain runs to 586 residues: Assimilatory ferredoxin-dependent nitrite reductase (586 aa).

[4Fe-4S] cluster-binding residues include cysteine 411, cysteine 417, cysteine 455, and cysteine 459. Residue cysteine 459 participates in siroheme binding. Residues 566-586 (SWYPFADEDEPPKTEQPMTSD) are disordered.

It belongs to the nitrite and sulfite reductase 4Fe-4S domain family. As to quaternary structure, monomer. Requires siroheme as cofactor. [4Fe-4S] cluster is required as a cofactor.

The enzyme catalyses 6 oxidized [2Fe-2S]-[ferredoxin] + NH4(+) + 2 H2O = nitrite + 6 reduced [2Fe-2S]-[ferredoxin] + 8 H(+). The protein operates within nitrogen metabolism; nitrate reduction (assimilation). With respect to regulation, inhibited by cyanide and azide. Its function is as follows. Catalyzes the reduction of nitrite to ammonium in the nitrate assimilation pathway, using ferredoxin as the electron donor. Can use reduced methyl viologen but neither NADPH nor NADH as electron donors. The sequence is that of Assimilatory ferredoxin-dependent nitrite reductase from Haloferax mediterranei (strain ATCC 33500 / DSM 1411 / JCM 8866 / NBRC 14739 / NCIMB 2177 / R-4) (Halobacterium mediterranei).